Reading from the N-terminus, the 488-residue chain is Diacylglycerol kinase 3 (488 aa).

Residues 1-24 (MDSPVSKTDASKEKFVASRPSTAD) are disordered. Positions 87 to 245 (APHAPMVVFI…SWKILVSMPS (159 aa)) constitute a DAGKc domain.

It belongs to the eukaryotic diacylglycerol kinase family. In terms of assembly, monomer.

It catalyses the reaction a 1,2-diacyl-sn-glycerol + ATP = a 1,2-diacyl-sn-glycero-3-phosphate + ADP + H(+). Its function is as follows. Phosphorylates the second messenger diacylglycerol (DAG) to generate phosphatidic acid (PA), another important signaling molecule. PA is required for plant development and responses to abiotic stress and pathogen attack. May be involved in the accumulation of PA during cold stress. This chain is Diacylglycerol kinase 3 (DGK3), found in Arabidopsis thaliana (Mouse-ear cress).